The chain runs to 741 residues: Catalase-peroxidase 2 (741 aa).

The N-terminal stretch at 1-27 is a signal peptide; sequence MKINTLPTLSALTLAMSLALGAGMATA. The tryptophyl-tyrosyl-methioninium (Trp-Tyr) (with M-255) cross-link spans 106–229; the sequence is WHSAGVYRIF…MGATQMGLIY (124 aa). His-107 serves as the catalytic Proton acceptor. The segment at residues 229-255 is a cross-link (tryptophyl-tyrosyl-methioninium (Tyr-Met) (with W-106)); that stretch reads YVNPEGPNGVPDPLASAKEIRDTFGRM. His-270 is a binding site for heme b.

This sequence belongs to the peroxidase family. Peroxidase/catalase subfamily. In terms of assembly, homodimer or homotetramer. The cofactor is heme b. In terms of processing, formation of the three residue Trp-Tyr-Met cross-link is important for the catalase, but not the peroxidase activity of the enzyme.

It carries out the reaction H2O2 + AH2 = A + 2 H2O. The enzyme catalyses 2 H2O2 = O2 + 2 H2O. Functionally, bifunctional enzyme with both catalase and broad-spectrum peroxidase activity. The chain is Catalase-peroxidase 2 from Shewanella oneidensis (strain ATCC 700550 / JCM 31522 / CIP 106686 / LMG 19005 / NCIMB 14063 / MR-1).